The following is a 607-amino-acid chain: Elongation factor 4 (607 aa).

In terms of domain architecture, tr-type G spans 11–193; it reads SRIRNFSIIA…QVVEKVPAPA (183 aa). GTP-binding positions include 23–28 and 140–143; these read DHGKST and NKID.

Belongs to the TRAFAC class translation factor GTPase superfamily. Classic translation factor GTPase family. LepA subfamily.

It is found in the cell membrane. It catalyses the reaction GTP + H2O = GDP + phosphate + H(+). Required for accurate and efficient protein synthesis under certain stress conditions. May act as a fidelity factor of the translation reaction, by catalyzing a one-codon backward translocation of tRNAs on improperly translocated ribosomes. Back-translocation proceeds from a post-translocation (POST) complex to a pre-translocation (PRE) complex, thus giving elongation factor G a second chance to translocate the tRNAs correctly. Binds to ribosomes in a GTP-dependent manner. The sequence is that of Elongation factor 4 from Shouchella clausii (strain KSM-K16) (Alkalihalobacillus clausii).